The chain runs to 296 residues: NAD kinase (296 aa).

D72 functions as the Proton acceptor in the catalytic mechanism. NAD(+) contacts are provided by residues 72 to 73 (DG), 146 to 147 (ND), R157, K174, D176, 187 to 192 (TAYALS), and Q247.

The protein belongs to the NAD kinase family. The cofactor is a divalent metal cation.

It localises to the cytoplasm. The enzyme catalyses NAD(+) + ATP = ADP + NADP(+) + H(+). Its function is as follows. Involved in the regulation of the intracellular balance of NAD and NADP, and is a key enzyme in the biosynthesis of NADP. Catalyzes specifically the phosphorylation on 2'-hydroxyl of the adenosine moiety of NAD to yield NADP. This is NAD kinase from Pseudomonas entomophila (strain L48).